The sequence spans 106 residues: ATP-dependent Clp protease adapter protein ClpS (106 aa).

Positions 1-13 (MPRNTSHEHDHGL) are enriched in basic and acidic residues. The disordered stretch occupies residues 1–20 (MPRNTSHEHDHGLMVEASKP).

The protein belongs to the ClpS family. Binds to the N-terminal domain of the chaperone ClpA.

Functionally, involved in the modulation of the specificity of the ClpAP-mediated ATP-dependent protein degradation. This chain is ATP-dependent Clp protease adapter protein ClpS, found in Xanthomonas axonopodis pv. citri (strain 306).